A 405-amino-acid chain; its full sequence is uncharacterized protein (405 aa).

Positions methionine 1–alanine 34 are cleaved as a signal peptide. Positions glutamate 348–serine 359 are enriched in basic and acidic residues. Positions glutamate 348–asparagine 405 are disordered. Low complexity-rich tracts occupy residues asparagine 360–asparagine 373 and glutamine 381–glutamine 392. Over residues alanine 393–asparagine 405 the composition is skewed to polar residues.

This sequence belongs to the LytR/CpsA/Psr (LCP) family.

This is an uncharacterized protein from Staphylococcus aureus (strain NCTC 8325 / PS 47).